The chain runs to 176 residues: MLIPPINLHAWIEEHRHLLKPPVGNKCIQQDGFIIMVVGGPNARTDYHYDEGPEWFFQLEGEMVLKVQDEGVARDIPIRAGEVFLLPPKVPHSPQRAAGSIGLVIERERLPNEQDGLQWYCPQCNHKLYEAMFPLKNIETDFPPVFDRFYRSLALRTCSQCGHLHPAPERYATVED.

Arginine 44 provides a ligand contact to O2. Residues histidine 48, glutamate 54, and histidine 92 each contribute to the Fe cation site. Glutamate 54 serves as a coordination point for substrate. Substrate-binding residues include arginine 96 and glutamate 106. Fe cation-binding residues include cysteine 121, cysteine 124, cysteine 158, and cysteine 161.

This sequence belongs to the 3-HAO family. In terms of assembly, homodimer. Requires Fe(2+) as cofactor.

It catalyses the reaction 3-hydroxyanthranilate + O2 = (2Z,4Z)-2-amino-3-carboxymuconate 6-semialdehyde. Its pathway is cofactor biosynthesis; NAD(+) biosynthesis; quinolinate from L-kynurenine: step 3/3. In terms of biological role, catalyzes the oxidative ring opening of 3-hydroxyanthranilate to 2-amino-3-carboxymuconate semialdehyde, which spontaneously cyclizes to quinolinate. In Xanthomonas euvesicatoria pv. vesicatoria (strain 85-10) (Xanthomonas campestris pv. vesicatoria), this protein is 3-hydroxyanthranilate 3,4-dioxygenase.